A 1412-amino-acid chain; its full sequence is Ecdysone-induced protein 75B, isoform B (1412 aa).

Residues 1–14 (MEAVQAAAAATSSG) are compositionally biased toward low complexity. 4 disordered regions span residues 1-96 (MEAV…PGGT), 110-204 (QRAT…QQHV), 258-298 (QYQQ…VPPP), and 321-448 (HFQQ…SIPD). A compositionally biased stretch (gly residues) spans 15-25 (GSSGSVPGSGS). Positions 32–57 (IKTEPIDFEMLHLEENERQQDIEREP) are enriched in basic and acidic residues. Over residues 58-68 (SSSNSNSNSNS) the composition is skewed to low complexity. The span at 69-81 (LTPQRYTHVQVQT) shows a compositional bias: polar residues. Residues 87–96 (PTGLTTPGGT) show a composition bias toward low complexity. Positions 124–133 (YSQQQGTAAS) are enriched in polar residues. Over residues 135–150 (SAPPETTALLTTTSGT) the composition is skewed to low complexity. The segment covering 151–164 (PQIIITRTLPSNQH) has biased composition (polar residues). Over residues 177–203 (HHYQQQQPQRQQSPPPLHHQQQQQQQH) the composition is skewed to low complexity. A compositionally biased stretch (pro residues) spans 266–284 (PLAPPPPPPPPPPPPPPPQ). Composition is skewed to low complexity over residues 323–371 (QQQQ…SSHI), 378–403 (SSSS…NSVM), and 417–447 (ASSS…SSIP). The nuclear receptor DNA-binding region spans 455–531 (TVLCRVCGDK…VGMSRDAVRF (77 aa)). 2 consecutive NR C4-type zinc fingers follow at residues 458 to 478 (CRVC…CEGC) and 495 to 514 (CTKN…CQYC). The NR LBD domain occupies 565 to 813 (DQPRLLAAVL…QQMWSMEDGN (249 aa)). 6 disordered regions span residues 837–878 (KSPL…SALA), 984–1021 (LDSP…SVDD), 1044–1064 (VSVS…KRQI), 1108–1174 (AEAD…SSHS), 1204–1317 (ENST…SNSA), and 1368–1401 (VTVT…NPGL). 5 stretches are compositionally biased toward low complexity: residues 854 to 866 (GSPS…GVSL), 1005 to 1017 (SSGG…SPRS), 1044 to 1058 (VSVS…STSS), 1110 to 1155 (ADAS…AQSQ), and 1163 to 1174 (SSPKASMASSHS). 2 stretches are compositionally biased toward polar residues: residues 1206-1219 (STAA…VGNR) and 1231-1253 (AVQN…QRQQ). Low complexity-rich tracts occupy residues 1254–1290 (SVSP…SASS), 1299–1317 (STSN…SNSA), and 1372–1400 (ASNG…PNPG).

This sequence belongs to the nuclear hormone receptor family. NR1 subfamily.

The protein localises to the nucleus. Its function is as follows. Implicated in the regulation of ecdysone-triggered gene hierarchies. Probably plays a key role in mediating the regulation of the larval molt by 20-OH-ecdysone. The protein is Ecdysone-induced protein 75B, isoform B (Eip75B) of Drosophila melanogaster (Fruit fly).